A 1426-amino-acid chain; its full sequence is Nephrocystin-4 (1426 aa).

Position 142 is a phosphoserine (Ser142). Disordered regions lie at residues 450 to 536 (GSEE…SPAQ) and 896 to 935 (RQGK…GRRG). Pro residues predominate over residues 474 to 486 (KPPTSPSSPPAPV). The span at 503-536 (SISQLAASPRSPTQHCLARPTSQLPHGSQASPAQ) shows a compositional bias: polar residues. The sufficient for basal bodies localization stretch occupies residues 823-1426 (LTLANVGHPC…EAFCVKVIYQ (604 aa)).

It belongs to the NPHP4 family. In terms of assembly, interacts with NPHP1. Interacts with NPHP1 and RPGRIP1L/NPHP8; NPHP1, NPHP4 and RPGRIP1L are proposed to form a functional NPHP1-4-8 module localized to cell-cell contacts and the ciliary transition zone; NPHP4 mediates the interaction between NPHP1 and RPGRIP1L. Interacts with IQCB1/NPHP5; the interaction likely requires additional interactors. Interacts with RPGRIP1, CEP164, JADE1, PALS1, INADL, PARD6A, INVS, DVL2, LATS1. Interacts with INTU; INTU mediates the interaction between NPHP4 and DAAM1. Interacts with SPATA7. As to expression, expressed in kidney, skeletal muscle, heart and liver, and to a lesser extent in brain and lung.

Its subcellular location is the cytoplasm. It is found in the cytoskeleton. The protein localises to the cilium basal body. The protein resides in the microtubule organizing center. It localises to the centrosome. Its subcellular location is the cell junction. It is found in the tight junction. The protein localises to the nucleus. In terms of biological role, involved in the organization of apical junctions; the function is proposed to implicate a NPHP1-4-8 module. Does not seem to be strictly required for ciliogenesis. Required for building functional cilia. Involved in the organization of the subapical actin network in multiciliated epithelial cells. Seems to recruit INT to basal bodies of motile cilia which subsequently interacts with actin-modifying proteins such as DAAM1. In cooperation with INVS may down-regulate the canonical Wnt pathway and promote the Wnt-PCP pathway by regulating expression and subcellular location of disheveled proteins. Stabilizes protein levels of JADE1 and promotes its translocation to the nucleus leading to cooperative inhibition of canonical Wnt signaling. Acts as a negative regulator of the hippo pathway by association with LATS1 and modifying LATS1-dependent phosphorylation and localization of WWTR1/TAZ. This chain is Nephrocystin-4 (NPHP4), found in Homo sapiens (Human).